Consider the following 417-residue polypeptide: mRNA export factor ICP27 homolog (417 aa).

A compositionally biased stretch (acidic residues) spans 1–28; that stretch reads MEDIIEGGISSDDDFDSSDSSSDEEESD. The tract at residues 1-143 is disordered; that stretch reads MEDIIEGGIS…NGPLRNGPPR (143 aa). The segment at 64–120 is interaction with RNA; sequence RQRSPITWEHQSPLSRVYRSPSPMRFGKRPRISSNSTSRSCKTSWADRVREAAAQRR. The Nuclear localization signal motif lies at 88-94; it reads RFGKRPR. Residues 96-107 show a composition bias toward low complexity; it reads SSNSTSRSCKTS. The interaction with host ALYREF or mouse ALYREF2 stretch occupies residues 106-120; the sequence is TSWADRVREAAAQRR. Residues 108–117 show a composition bias toward basic and acidic residues; sequence WADRVREAAA. The Nuclear localization signal signature appears at 118 to 127; the sequence is QRRPSRPFRK. Basic residues predominate over residues 120–130; it reads RPSRPFRKPYS. A compositionally biased stretch (low complexity) spans 132–141; sequence PRNGPLRNGP. Residues C295, H385, C389, and C394 each contribute to the Zn(2+) site. Residues 295–394 form a CHC2-type zinc finger; the sequence is CLMQTTPQDH…HLNKCPSSTC (100 aa).

This sequence belongs to the HHV-1 ICP27 protein family. Homodimer. Homodimerization is required for transactivation. Interacts with host ALYREF and with mouse ALYREF2. Associates in a complex with RNA, and host export factors NXF1/TAP and ALYREF or ALYREF2; these interactions allow nuclear export of viral transcripts.

It localises to the host cytoplasm. It is found in the host nucleus. Probably acts as a viral splicing factor that regulates viral RNA splicing. Functions as a multifunctional regulator of the expression of viral lytic genes. Early protein that promotes the accumulation and nuclear export of viral intronless RNA transcripts by interacting with mRNAs and cellular export proteins. In Saimiriine herpesvirus 2 (strain 11) (SaHV-2), this protein is mRNA export factor ICP27 homolog (EJRF1).